The chain runs to 233 residues: MNTQEIINLIANSKKKTLTVAYLTGNLKNIDFKSFEFFGTENFGILFGEYEEIVKLIENNKEHIEKYKLEIKARNSAIPLANLAKYNARIEPGAIIRDLVEIGDGAVIMMGAVINIGAKIGEGTMIDMNAVVGGRAIIGKNCHIGAGAVIAGVIEPPSAQPVIIEDNVMVGANAVILEGVRIGQNSVIAAGAVVIEDVPPNSVVAGVPAKIIKKVDEKTKQKTQIVEGLRKLR.

Belongs to the transferase hexapeptide repeat family. DapH subfamily.

The catalysed reaction is (S)-2,3,4,5-tetrahydrodipicolinate + acetyl-CoA + H2O = L-2-acetamido-6-oxoheptanedioate + CoA. Its pathway is amino-acid biosynthesis; L-lysine biosynthesis via DAP pathway; LL-2,6-diaminopimelate from (S)-tetrahydrodipicolinate (acetylase route): step 1/3. In terms of biological role, catalyzes the transfer of an acetyl group from acetyl-CoA to tetrahydrodipicolinate. The chain is 2,3,4,5-tetrahydropyridine-2,6-dicarboxylate N-acetyltransferase from Thermosipho africanus (strain TCF52B).